The following is a 358-amino-acid chain: Chorismate synthase (358 aa).

The NADP(+) site is built by Arg48 and Arg54. FMN is bound by residues 125 to 127 (RSS), Gly282, 297 to 301 (KPPAS), and Arg323.

It belongs to the chorismate synthase family. In terms of assembly, homotetramer. FMNH2 serves as cofactor.

It carries out the reaction 5-O-(1-carboxyvinyl)-3-phosphoshikimate = chorismate + phosphate. Its pathway is metabolic intermediate biosynthesis; chorismate biosynthesis; chorismate from D-erythrose 4-phosphate and phosphoenolpyruvate: step 7/7. Functionally, catalyzes the anti-1,4-elimination of the C-3 phosphate and the C-6 proR hydrogen from 5-enolpyruvylshikimate-3-phosphate (EPSP) to yield chorismate, which is the branch point compound that serves as the starting substrate for the three terminal pathways of aromatic amino acid biosynthesis. This reaction introduces a second double bond into the aromatic ring system. This Roseiflexus castenholzii (strain DSM 13941 / HLO8) protein is Chorismate synthase.